Consider the following 49-residue polypeptide: Small, acid-soluble spore protein O (49 aa).

The interval 1–49 (MGKRKANHTISGMNAASAQGQGTGYNEEFANEPFTPAERQNNKKRKKNQ) is disordered. The span at 8–20 (HTISGMNAASAQG) shows a compositional bias: polar residues.

This sequence belongs to the SspO family.

The protein resides in the spore core. This chain is Small, acid-soluble spore protein O, found in Bacillus cereus (strain ATCC 14579 / DSM 31 / CCUG 7414 / JCM 2152 / NBRC 15305 / NCIMB 9373 / NCTC 2599 / NRRL B-3711).